Here is a 115-residue protein sequence, read N- to C-terminus: MAETLLKSTTRHIRLFTARVENGDLVPDPEQLTLDLDPDNEFLWTEGTVTTIQTRFRDLVESYAGQPLNDYNLRRIGTELEGSIRELLQAGSLTYNPDCRVMNYSMGLPRTPELL.

The protein belongs to the complex I NdhM subunit family. As to quaternary structure, NDH-1 can be composed of about 15 different subunits; different subcomplexes with different compositions have been identified which probably have different functions.

Its subcellular location is the cellular thylakoid membrane. It catalyses the reaction a plastoquinone + NADH + (n+1) H(+)(in) = a plastoquinol + NAD(+) + n H(+)(out). It carries out the reaction a plastoquinone + NADPH + (n+1) H(+)(in) = a plastoquinol + NADP(+) + n H(+)(out). Its function is as follows. NDH-1 shuttles electrons from an unknown electron donor, via FMN and iron-sulfur (Fe-S) centers, to quinones in the respiratory and/or the photosynthetic chain. The immediate electron acceptor for the enzyme in this species is believed to be plastoquinone. Couples the redox reaction to proton translocation, and thus conserves the redox energy in a proton gradient. Cyanobacterial NDH-1 also plays a role in inorganic carbon-concentration. The protein is NAD(P)H-quinone oxidoreductase subunit M of Synechococcus sp. (strain WH7803).